The chain runs to 476 residues: ATP synthase subunit beta (476 aa).

Position 152–159 (152–159 (GGAGVGKT)) interacts with ATP.

The protein belongs to the ATPase alpha/beta chains family. F-type ATPases have 2 components, CF(1) - the catalytic core - and CF(0) - the membrane proton channel. CF(1) has five subunits: alpha(3), beta(3), gamma(1), delta(1), epsilon(1). CF(0) has three main subunits: a(1), b(2) and c(9-12). The alpha and beta chains form an alternating ring which encloses part of the gamma chain. CF(1) is attached to CF(0) by a central stalk formed by the gamma and epsilon chains, while a peripheral stalk is formed by the delta and b chains.

Its subcellular location is the cell inner membrane. It carries out the reaction ATP + H2O + 4 H(+)(in) = ADP + phosphate + 5 H(+)(out). Produces ATP from ADP in the presence of a proton gradient across the membrane. The catalytic sites are hosted primarily by the beta subunits. This chain is ATP synthase subunit beta, found in Granulibacter bethesdensis (strain ATCC BAA-1260 / CGDNIH1).